A 158-amino-acid chain; its full sequence is Cyclic pyranopterin monophosphate synthase (158 aa).

Residues 75–77 (LCH) and 113–114 (ME) contribute to the substrate site. D128 is an active-site residue.

Belongs to the MoaC family. In terms of assembly, homohexamer; trimer of dimers.

The enzyme catalyses (8S)-3',8-cyclo-7,8-dihydroguanosine 5'-triphosphate = cyclic pyranopterin phosphate + diphosphate. It functions in the pathway cofactor biosynthesis; molybdopterin biosynthesis. Functionally, catalyzes the conversion of (8S)-3',8-cyclo-7,8-dihydroguanosine 5'-triphosphate to cyclic pyranopterin monophosphate (cPMP). The protein is Cyclic pyranopterin monophosphate synthase of Paraburkholderia xenovorans (strain LB400).